The primary structure comprises 48 residues: Cytochrome b559 subunit beta (48 aa).

A helical transmembrane segment spans residues 23–39 (WLAVHALAIPSVFFLGS). His27 serves as a coordination point for heme.

The protein belongs to the PsbE/PsbF family. As to quaternary structure, heterodimer of an alpha subunit and a beta subunit. PSII is composed of 1 copy each of membrane proteins PsbA, PsbB, PsbC, PsbD, PsbE, PsbF, PsbH, PsbI, PsbJ, PsbK, PsbL, PsbM, PsbT, PsbX, PsbY, Psb30/Ycf12, peripheral proteins PsbO, CyanoQ (PsbQ), PsbU, PsbV and a large number of cofactors. It forms dimeric complexes. Requires heme b as cofactor.

Its subcellular location is the cellular thylakoid membrane. Functionally, this b-type cytochrome is tightly associated with the reaction center of photosystem II (PSII). PSII is a light-driven water:plastoquinone oxidoreductase that uses light energy to abstract electrons from H(2)O, generating O(2) and a proton gradient subsequently used for ATP formation. It consists of a core antenna complex that captures photons, and an electron transfer chain that converts photonic excitation into a charge separation. This Prochlorococcus marinus (strain MIT 9301) protein is Cytochrome b559 subunit beta.